We begin with the raw amino-acid sequence, 188 residues long: Protein-L-isoaspartate O-methyltransferase (188 aa).

Ser33 is an active-site residue.

This sequence belongs to the methyltransferase superfamily. L-isoaspartyl/D-aspartyl protein methyltransferase family.

It is found in the cytoplasm. It carries out the reaction [protein]-L-isoaspartate + S-adenosyl-L-methionine = [protein]-L-isoaspartate alpha-methyl ester + S-adenosyl-L-homocysteine. Catalyzes the methyl esterification of L-isoaspartyl residues in peptides and proteins that result from spontaneous decomposition of normal L-aspartyl and L-asparaginyl residues. It plays a role in the repair and/or degradation of damaged proteins. The polypeptide is Protein-L-isoaspartate O-methyltransferase (Methanocella arvoryzae (strain DSM 22066 / NBRC 105507 / MRE50)).